A 245-amino-acid chain; its full sequence is tRNA pseudouridine synthase A (245 aa).

The active-site Nucleophile is D52. Y111 provides a ligand contact to substrate.

This sequence belongs to the tRNA pseudouridine synthase TruA family. As to quaternary structure, homodimer.

It catalyses the reaction uridine(38/39/40) in tRNA = pseudouridine(38/39/40) in tRNA. Formation of pseudouridine at positions 38, 39 and 40 in the anticodon stem and loop of transfer RNAs. This is tRNA pseudouridine synthase A from Zymomonas mobilis subsp. mobilis (strain ATCC 31821 / ZM4 / CP4).